A 171-amino-acid polypeptide reads, in one-letter code: Large ribosomal subunit protein uL10 (171 aa).

The protein belongs to the universal ribosomal protein uL10 family. In terms of assembly, part of the ribosomal stalk of the 50S ribosomal subunit. The N-terminus interacts with L11 and the large rRNA to form the base of the stalk. The C-terminus forms an elongated spine to which L12 dimers bind in a sequential fashion forming a multimeric L10(L12)X complex.

In terms of biological role, forms part of the ribosomal stalk, playing a central role in the interaction of the ribosome with GTP-bound translation factors. The protein is Large ribosomal subunit protein uL10 of Maricaulis maris (strain MCS10) (Caulobacter maris).